The chain runs to 92 residues: Large ribosomal subunit protein eL34 (92 aa).

This sequence belongs to the eukaryotic ribosomal protein eL34 family.

This chain is Large ribosomal subunit protein eL34, found in Staphylothermus marinus (strain ATCC 43588 / DSM 3639 / JCM 9404 / F1).